The primary structure comprises 386 residues: N-acetylneuraminate epimerase (386 aa).

The N-terminal stretch at 1-29 is a signal peptide; the sequence is MGMQMKNFKKMMTLMALCFSVAITTSGYA. 7 Kelch repeats span residues 51–95, 97–149, 151–186, 187–232, 235–284, 306–355, and 357–386; these read VIYV…VFLN, ELYV…VKLN, TMVL…KVIY, NYFN…VMGN, LMLI…LAGA, QNYT…SYGD, and VFLI…LLIK. The Proton acceptor role is filled by Glu241.

It belongs to the NanM family. Homodimer.

It is found in the periplasm. It catalyses the reaction N-acetyl-alpha-neuraminate = N-acetyl-beta-neuraminate. Converts alpha-N-acetylneuranimic acid (Neu5Ac) to the beta-anomer, accelerating the equilibrium between the alpha- and beta-anomers. Probably facilitates sialidase-negative bacteria to compete successfully for limited amounts of extracellular Neu5Ac, which is likely taken up in the beta-anomer. In addition, the rapid removal of sialic acid from solution might be advantageous to the bacterium to damp down host responses. The protein is N-acetylneuraminate epimerase of Salmonella typhimurium (strain LT2 / SGSC1412 / ATCC 700720).